Here is a 503-residue protein sequence, read N- to C-terminus: MRRPKISLKKYFYLTLICALLLIFGFSLKEREIWKTLSPRSSQITTQQQQHQHLHQLQSMDEEHPMATSSTPPPIAATLLPEVADNLVEEPEQTVLEEEESEADRLQEPPAEKAWFFKNGEYYPKPAKTYSNRKARKRHAPRLLPHQDPYSDRIINQLMYVPHNYEEIKSSGKLKTILLYNGLGPWNVKKGRDVFLKAKCPVDTCELTANRDLASTADMILYKDHYIPTGIRRPSNSKQVSMLYYLECPYHTQNVKVPDAINWTATYRRDSTIVAPYEKWQYYDTKVQQQEQDINYSVNKTKKVAWFVSNCGARNGRLQYAHELQKYIEVDIYGACGNFKCSRSTADKCFEILDNDYKFYLAFENSNCKDYITEKFFVNALNRRVLPIVMGARPEDYEVSAPRRSYIHVDEFSSPKELAEYLRILDHDDELYNSYFKWKGTGEFINTYYWCRVCATLHNEEQLRKPRWYTDLNDWWRGPGVCTTRSWRNFKARKDVISDSSDD.

Topologically, residues Met-1–Lys-10 are cytoplasmic. The helical; Signal-anchor for type II membrane protein transmembrane segment at Tyr-11–Leu-28 threads the bilayer. Residues Lys-29–Asp-503 lie on the Lumenal side of the membrane. The tract at residues Ile-44–Thr-71 is disordered. A compositionally biased stretch (low complexity) spans Gln-47–Gln-58. Asn-262, Asn-295, and Asn-299 each carry an N-linked (GlcNAc...) asparagine glycan.

Belongs to the glycosyltransferase 10 family. Mn(2+) is required as a cofactor.

It is found in the golgi apparatus. The protein localises to the golgi stack membrane. It carries out the reaction N(4)-{beta-D-GlcNAc-(1-&gt;2)-alpha-D-Man-(1-&gt;3)-[beta-D-GlcNAc-(1-&gt;2)-alpha-D-Man-(1-&gt;6)]-beta-D-Man-(1-&gt;4)-beta-D-GlcNAc-(1-&gt;4)-beta-D-GlcNAc}-L-asparaginyl-[protein] + GDP-beta-L-fucose = N(4)-{beta-D-GlcNAc-(1-&gt;2)-alpha-D-Man-(1-&gt;3)-[beta-D-GlcNAc-(1-&gt;2)-alpha-D-Man-(1-&gt;6)]-beta-D-Man-(1-&gt;4)-beta-D-GlcNAc-(1-&gt;4)-[alpha-L-Fuc(1-&gt;3)]-beta-D-GlcNAc}-L-asparaginyl-[protein] + GDP + H(+). Its pathway is protein modification; protein glycosylation. Functionally, catalyzes alpha-1,3 glycosidic linkages of N-glycans. Plays a role in neuronal development by promoting ventral nerve cord formation, possibly by promoting interactions between migrating cells and the extracellular matrix or by promoting neural activity. This chain is Glycoprotein 3-alpha-L-fucosyltransferase A (FucTA), found in Drosophila melanogaster (Fruit fly).